The sequence spans 66 residues: DNA gyrase inhibitor YacG (66 aa).

Residues Cys-10, Cys-13, Cys-29, and Cys-33 each contribute to the Zn(2+) site. Positions 46-66 (KRIPSDVQITDSDEWSDETRY) are disordered. Over residues 56–66 (DSDEWSDETRY) the composition is skewed to acidic residues.

Belongs to the DNA gyrase inhibitor YacG family. As to quaternary structure, interacts with GyrB. Zn(2+) is required as a cofactor.

Functionally, inhibits all the catalytic activities of DNA gyrase by preventing its interaction with DNA. Acts by binding directly to the C-terminal domain of GyrB, which probably disrupts DNA binding by the gyrase. The polypeptide is DNA gyrase inhibitor YacG (Sodalis glossinidius (strain morsitans)).